Consider the following 402-residue polypeptide: NADH-quinone oxidoreductase subunit D (402 aa).

The protein belongs to the complex I 49 kDa subunit family. In terms of assembly, NDH-1 is composed of 14 different subunits. Subunits NuoB, C, D, E, F, and G constitute the peripheral sector of the complex.

It localises to the cell inner membrane. The enzyme catalyses a quinone + NADH + 5 H(+)(in) = a quinol + NAD(+) + 4 H(+)(out). NDH-1 shuttles electrons from NADH, via FMN and iron-sulfur (Fe-S) centers, to quinones in the respiratory chain. The immediate electron acceptor for the enzyme in this species is believed to be ubiquinone. Couples the redox reaction to proton translocation (for every two electrons transferred, four hydrogen ions are translocated across the cytoplasmic membrane), and thus conserves the redox energy in a proton gradient. The sequence is that of NADH-quinone oxidoreductase subunit D from Cereibacter sphaeroides (strain ATCC 17025 / ATH 2.4.3) (Rhodobacter sphaeroides).